The primary structure comprises 211 residues: tRNA (guanine-N(7)-)-methyltransferase (211 aa).

Residues E44, D69, D96, and D118 each coordinate S-adenosyl-L-methionine. D118 is an active-site residue. K122 lines the substrate pocket. Residues 124 to 129 (RHEKRR) are interaction with RNA. Substrate-binding positions include D154 and 191 to 194 (TEYE).

It belongs to the class I-like SAM-binding methyltransferase superfamily. TrmB family.

The catalysed reaction is guanosine(46) in tRNA + S-adenosyl-L-methionine = N(7)-methylguanosine(46) in tRNA + S-adenosyl-L-homocysteine. It participates in tRNA modification; N(7)-methylguanine-tRNA biosynthesis. Functionally, catalyzes the formation of N(7)-methylguanine at position 46 (m7G46) in tRNA. The protein is tRNA (guanine-N(7)-)-methyltransferase of Streptococcus equi subsp. zooepidemicus (strain H70).